The chain runs to 299 residues: Putative ammonium transporter 4 member 1 (299 aa).

The next 5 helical transmembrane spans lie at Ala16 to Leu36, Val59 to Gly79, Leu104 to Val124, Val158 to Leu178, and Ala218 to Val238.

This sequence belongs to the ammonia transporter channel (TC 1.A.11.2) family.

Its subcellular location is the membrane. The sequence is that of Putative ammonium transporter 4 member 1 (AMT4-1) from Oryza sativa subsp. japonica (Rice).